Consider the following 456-residue polypeptide: Methylenetetrahydrofolate--tRNA-(uracil-5-)-methyltransferase TrmFO (456 aa).

9-14 (GGGMAG) contributes to the FAD binding site.

The protein belongs to the MnmG family. TrmFO subfamily. The cofactor is FAD.

The protein resides in the cytoplasm. It catalyses the reaction uridine(54) in tRNA + (6R)-5,10-methylene-5,6,7,8-tetrahydrofolate + NADH + H(+) = 5-methyluridine(54) in tRNA + (6S)-5,6,7,8-tetrahydrofolate + NAD(+). The catalysed reaction is uridine(54) in tRNA + (6R)-5,10-methylene-5,6,7,8-tetrahydrofolate + NADPH + H(+) = 5-methyluridine(54) in tRNA + (6S)-5,6,7,8-tetrahydrofolate + NADP(+). In terms of biological role, catalyzes the folate-dependent formation of 5-methyl-uridine at position 54 (M-5-U54) in all tRNAs. This Novosphingobium aromaticivorans (strain ATCC 700278 / DSM 12444 / CCUG 56034 / CIP 105152 / NBRC 16084 / F199) protein is Methylenetetrahydrofolate--tRNA-(uracil-5-)-methyltransferase TrmFO.